The sequence spans 353 residues: Photosystem II protein D1 (353 aa).

The residue at position 2 (Thr-2) is an N-acetylthreonine. Thr-2 carries the phosphothreonine modification. 3 helical membrane-spanning segments follow: residues 29-46, 118-133, and 142-156; these read YIGWFGVLMIPTLLTATS, HFLLGVACYMGREWEL, and WIAVAYSAPVAAATA. Residue His-118 participates in chlorophyll a binding. Tyr-126 provides a ligand contact to pheophytin a. The [CaMn4O5] cluster site is built by Asp-170 and Glu-189. A helical transmembrane segment spans residues 197-218; it reads FHMLGVAGVFGGSLFSAMHGSL. His-198 is a chlorophyll a binding site. A quinone is bound by residues His-215 and 264 to 265; that span reads SF. His-215 contributes to the Fe cation binding site. His-272 is a binding site for Fe cation. The chain crosses the membrane as a helical span at residues 274–288; it reads FLAAWPVVGIWFTAL. 4 residues coordinate [CaMn4O5] cluster: His-332, Glu-333, Asp-342, and Ala-344. Residues 345–353 constitute a propeptide that is removed on maturation; sequence AMEAPSVNG.

The protein belongs to the reaction center PufL/M/PsbA/D family. In terms of assembly, PSII is composed of 1 copy each of membrane proteins PsbA, PsbB, PsbC, PsbD, PsbE, PsbF, PsbH, PsbI, PsbJ, PsbK, PsbL, PsbM, PsbT, PsbX, PsbY, PsbZ, Psb30/Ycf12, at least 3 peripheral proteins of the oxygen-evolving complex and a large number of cofactors. It forms dimeric complexes. It depends on The D1/D2 heterodimer binds P680, chlorophylls that are the primary electron donor of PSII, and subsequent electron acceptors. It shares a non-heme iron and each subunit binds pheophytin, quinone, additional chlorophylls, carotenoids and lipids. D1 provides most of the ligands for the Mn4-Ca-O5 cluster of the oxygen-evolving complex (OEC). There is also a Cl(-1) ion associated with D1 and D2, which is required for oxygen evolution. The PSII complex binds additional chlorophylls, carotenoids and specific lipids. as a cofactor. In terms of processing, tyr-161 forms a radical intermediate that is referred to as redox-active TyrZ, YZ or Y-Z. Post-translationally, C-terminally processed by CTPA; processing is essential to allow assembly of the oxygen-evolving complex and thus photosynthetic growth.

It localises to the plastid. Its subcellular location is the chloroplast thylakoid membrane. The enzyme catalyses 2 a plastoquinone + 4 hnu + 2 H2O = 2 a plastoquinol + O2. Its function is as follows. Photosystem II (PSII) is a light-driven water:plastoquinone oxidoreductase that uses light energy to abstract electrons from H(2)O, generating O(2) and a proton gradient subsequently used for ATP formation. It consists of a core antenna complex that captures photons, and an electron transfer chain that converts photonic excitation into a charge separation. The D1/D2 (PsbA/PsbD) reaction center heterodimer binds P680, the primary electron donor of PSII as well as several subsequent electron acceptors. The protein is Photosystem II protein D1 of Phaseolus vulgaris (Kidney bean).